Here is a 478-residue protein sequence, read N- to C-terminus: Nuclear distribution protein PAC1 (478 aa).

The 33-residue stretch at 9 to 41 folds into the LisH domain; the sequence is QAEELHKAMIAYLLSANLPKSAAALREELADSV. Residues 60 to 87 are a coiled coil; the sequence is TSVVRLQKKIMDLESRNNALQSELDSAT. WD repeat units lie at residues 113 to 154, 156 to 196, 200 to 247, 250 to 289, 292 to 352, 354 to 393, 398 to 439, and 440 to 477; these read SHRE…RTIK, HTKA…KNIR, GHDH…CVKT, GHVD…TKST, GHEH…IKTL, GHDN…KCVR, AHGH…AASA, and INGV…RVFA.

It belongs to the WD repeat LIS1/nudF family. In terms of assembly, self-associates. Interacts with NDL1 and dynein.

It is found in the cytoplasm. The protein localises to the cytoskeleton. Its subcellular location is the spindle pole. Its function is as follows. Positively regulates the activity of the minus-end directed microtubule motor protein dynein. May enhance dynein-mediated microtubule sliding by targeting dynein to the microtubule plus end. Required for nuclear migration during vegetative growth as well as development. Required for retrograde early endosome (EE) transport from the hyphal tip. Required for localization of dynein to the mitotic spindle poles. Recruits additional proteins to the dynein complex at SPBs. The chain is Nuclear distribution protein PAC1 from Paracoccidioides brasiliensis (strain Pb18).